The sequence spans 125 residues: Cysteine proteinase inhibitor 3 (125 aa).

Positions 1 to 22 are cleaved as a signal peptide; it reads MESKTFWIVTLLLCGTIQLAIC. Residues 36–124 form the Cystatin domain; it reads GGVHDLRGNQ…KQLQEFKESS (89 aa). The Secondary area of contact motif lies at 80–84; that stretch reads QVVAG.

The protein belongs to the cystatin family. Phytocystatin subfamily.

It is found in the secreted. In terms of biological role, specific inhibitor of cysteine proteinases. Probably involved in the regulation of endogenous processes and in defense against pests and pathogens. The sequence is that of Cysteine proteinase inhibitor 3 (CYS3) from Arabidopsis thaliana (Mouse-ear cress).